Consider the following 401-residue polypeptide: Phosphoglycerate kinase (401 aa).

Residues 21 to 23, R36, 59 to 62, R119, and R160 each bind substrate; these read DFN and HLGR. Residues K212, E330, and 357–360 each bind ATP; that span reads GGDS.

The protein belongs to the phosphoglycerate kinase family. Monomer.

The protein localises to the cytoplasm. The catalysed reaction is (2R)-3-phosphoglycerate + ATP = (2R)-3-phospho-glyceroyl phosphate + ADP. Its pathway is carbohydrate degradation; glycolysis; pyruvate from D-glyceraldehyde 3-phosphate: step 2/5. In Limosilactobacillus reuteri subsp. reuteri (strain JCM 1112) (Lactobacillus reuteri), this protein is Phosphoglycerate kinase.